A 276-amino-acid chain; its full sequence is Small ribosomal subunit protein uS3 (276 aa).

A KH type-2 domain is found at 17–86; it reads VDEYLAKELD…NPQIDVQDVG (70 aa). A disordered region spans residues 193–276; the sequence is FQINAPPKEP…AETHGDIQDR (84 aa). A compositionally biased stretch (low complexity) spans 214–227; the sequence is EAEPSQAAETQEQQ. Composition is skewed to basic and acidic residues over residues 228 to 240 and 258 to 276; these read AGEKKSELDRLLD and PESRTEMSEAETHGDIQDR.

It belongs to the universal ribosomal protein uS3 family. As to quaternary structure, part of the 30S ribosomal subunit.

Its function is as follows. Binds the lower part of the 30S subunit head. The protein is Small ribosomal subunit protein uS3 of Methanothrix thermoacetophila (strain DSM 6194 / JCM 14653 / NBRC 101360 / PT) (Methanosaeta thermophila).